Consider the following 117-residue polypeptide: Non-specific lipid-transfer protein 1 (117 aa).

The signal sequence occupies residues 1–25 (MAGLVKLSCLVLACMIVAGPIATNA). 4 disulfide bridges follow: cysteine 29-cysteine 76, cysteine 39-cysteine 53, cysteine 54-cysteine 99, and cysteine 74-cysteine 113.

Belongs to the plant LTP family.

Its function is as follows. Plant non-specific lipid-transfer proteins transfer phospholipids as well as galactolipids across membranes. May play a role in wax or cutin deposition in the cell walls of expanding epidermal cells and certain secretory tissues. In Brassica napus (Rape), this protein is Non-specific lipid-transfer protein 1 (LTP1).